A 145-amino-acid polypeptide reads, in one-letter code: Copper transporter 6 (145 aa).

A run of 2 helical transmembrane segments spans residues 47-67 and 99-119; these read LGMYVLCLIVVFLLAVIVEWL and YLVMLAVMSFNGGVFIVAIAG.

It belongs to the copper transporter (Ctr) (TC 1.A.56) family. SLC31A subfamily.

It is found in the membrane. In terms of biological role, involved in the transport of copper. The polypeptide is Copper transporter 6 (COPT6) (Arabidopsis thaliana (Mouse-ear cress)).